The sequence spans 298 residues: GTP cyclohydrolase FolE2 (298 aa).

It belongs to the GTP cyclohydrolase IV family.

It catalyses the reaction GTP + H2O = 7,8-dihydroneopterin 3'-triphosphate + formate + H(+). The protein operates within cofactor biosynthesis; 7,8-dihydroneopterin triphosphate biosynthesis; 7,8-dihydroneopterin triphosphate from GTP: step 1/1. Its function is as follows. Converts GTP to 7,8-dihydroneopterin triphosphate. This Pseudomonas aeruginosa (strain LESB58) protein is GTP cyclohydrolase FolE2.